A 499-amino-acid polypeptide reads, in one-letter code: Lysine--tRNA ligase (499 aa).

The Mg(2+) site is built by glutamate 408 and glutamate 415.

Belongs to the class-II aminoacyl-tRNA synthetase family. In terms of assembly, homodimer. The cofactor is Mg(2+).

Its subcellular location is the cytoplasm. The catalysed reaction is tRNA(Lys) + L-lysine + ATP = L-lysyl-tRNA(Lys) + AMP + diphosphate. This chain is Lysine--tRNA ligase, found in Bacillus cytotoxicus (strain DSM 22905 / CIP 110041 / 391-98 / NVH 391-98).